We begin with the raw amino-acid sequence, 307 residues long: MANITAAMVKDLRESTGAGMMDCKAALTETGGDMQAAQDWLRKKGLSKAAKKAGRVAAEGLIGALTSGKKGVVVEVNSETDFVARNEHFQGLVKMIAQVALDVGADVEKIKAAKVGSITVEAAIADSIATIGENQSLRRAAALEVSEGVVASYVHGAVIEGAGKLGVIVALESPGKTDELAALGRQLAMHVAAANPQAIDAAGLDPEVVKREKDVLSDKYRQQGKPENVIEKIVESGLKTYYKEVTLLEQAFIHDSGKSVAQALKEAEGKVGGPIKVAGFVRYALGEGIEKEETDFAAEVAAASGKK.

Residues 80–83 are involved in Mg(2+) ion dislocation from EF-Tu; it reads TDFV.

It belongs to the EF-Ts family.

The protein resides in the cytoplasm. Its function is as follows. Associates with the EF-Tu.GDP complex and induces the exchange of GDP to GTP. It remains bound to the aminoacyl-tRNA.EF-Tu.GTP complex up to the GTP hydrolysis stage on the ribosome. In Bradyrhizobium sp. (strain ORS 278), this protein is Elongation factor Ts.